The primary structure comprises 137 residues: ATP synthase epsilon chain (137 aa).

It belongs to the ATPase epsilon chain family. In terms of assembly, F-type ATPases have 2 components, CF(1) - the catalytic core - and CF(0) - the membrane proton channel. CF(1) has five subunits: alpha(3), beta(3), gamma(1), delta(1), epsilon(1). CF(0) has three main subunits: a, b and c.

The protein localises to the cell membrane. Functionally, produces ATP from ADP in the presence of a proton gradient across the membrane. The chain is ATP synthase epsilon chain from Desulforudis audaxviator (strain MP104C).